We begin with the raw amino-acid sequence, 231 residues long: NKG2-C type II integral membrane protein (231 aa).

Residues 1 to 12 show a composition bias toward polar residues; sequence MNKQRGTFSEVS. The interval 1–31 is disordered; the sequence is MNKQRGTFSEVSLAQDPKRQQRKPKDNKSSI. The Cytoplasmic segment spans residues 1 to 70; sequence MNKQRGTFSE…CQGLLPPPEK (70 aa). The span at 16–28 shows a compositional bias: basic and acidic residues; it reads DPKRQQRKPKDNK. A helical; Signal-anchor for type II membrane protein transmembrane segment spans residues 71-93; that stretch reads LTAEVLGIICIVLMATVLKTVVL. Topologically, residues 94–231 are extracellular; that stretch reads IPFLEQNNSF…SKRYYCKHKL (138 aa). N-linked (GlcNAc...) asparagine glycosylation is present at N100. The C-type lectin domain occupies 116 to 229; the sequence is HCPEEWITYS…GSSKRYYCKH (114 aa). Cystine bridges form between C117-C128, C145-C227, and C206-C219. N149 is a glycosylation site (N-linked (GlcNAc...) asparagine).

Heterodimer with KLRD1; disulfide-linked. KLRD1-KLRC2 receptor complex interacts with TYROBP/DAP12 homodimer; this interaction is necessary for the expression on the cell surface. As to expression, natural killer cells.

It is found in the cell membrane. In terms of biological role, immune activating receptor involved in self-nonself discrimination. In complex with KLRD1 on cytotoxic lymphocyte subsets, recognizes non-classical major histocompatibility MHC-E loaded with signal sequence-derived peptides from non-classical MHC-G molecules, likely playing a role in the generation and effector functions of adaptive natural killer (NK) cells and in maternal-fetal tolerance during pregnancy. Regulates the effector functions of terminally differentiated cytotoxic lymphocyte subsets, and in particular may play a role in adaptive NK cell response to viral infection. Upon MHC-E-peptide binding, transmits intracellular signals via the adapter protein TYROBP/DAP12, triggering the phosphorylation of proximal signaling molecules and cell activation. This Macaca mulatta (Rhesus macaque) protein is NKG2-C type II integral membrane protein (KLRC2).